Reading from the N-terminus, the 896-residue chain is Bifunctional glutamine synthetase adenylyltransferase/adenylyl-removing enzyme (896 aa).

Positions 1–411 are adenylyl removase; sequence MSDNRLDTAR…LFNEILSEPE (411 aa). The segment at 417–896 is adenylyl transferase; the sequence is NSEWQWAWQE…EVFGEEAATA (480 aa).

The protein belongs to the GlnE family. Requires Mg(2+) as cofactor.

It catalyses the reaction [glutamine synthetase]-O(4)-(5'-adenylyl)-L-tyrosine + phosphate = [glutamine synthetase]-L-tyrosine + ADP. The catalysed reaction is [glutamine synthetase]-L-tyrosine + ATP = [glutamine synthetase]-O(4)-(5'-adenylyl)-L-tyrosine + diphosphate. Involved in the regulation of glutamine synthetase GlnA, a key enzyme in the process to assimilate ammonia. When cellular nitrogen levels are high, the C-terminal adenylyl transferase (AT) inactivates GlnA by covalent transfer of an adenylyl group from ATP to specific tyrosine residue of GlnA, thus reducing its activity. Conversely, when nitrogen levels are low, the N-terminal adenylyl removase (AR) activates GlnA by removing the adenylyl group by phosphorolysis, increasing its activity. The regulatory region of GlnE binds the signal transduction protein PII (GlnB) which indicates the nitrogen status of the cell. The sequence is that of Bifunctional glutamine synthetase adenylyltransferase/adenylyl-removing enzyme from Neisseria meningitidis serogroup A / serotype 4A (strain DSM 15465 / Z2491).